The following is a 1029-amino-acid chain: Putative B3 domain-containing protein Os03g0621600 (1029 aa).

3 DNA-binding regions (TF-B3) span residues 147–240 (DTYF…FDPS), 339–430 (VAVM…RKMK), and 450–543 (EKYF…FDPS). A disordered region spans residues 572–605 (TSYHDQPKGNKHWMQKDSSSKGNKIGNTRSSNTP). The span at 591-605 (SKGNKIGNTRSSNTP) shows a compositional bias: polar residues. The segment at residues 731–824 (YKNFFKVMIG…KLKVLIFGPS (94 aa)) is a DNA-binding region (TF-B3 4). Over residues 852–867 (SSNSHDLPVKSPQNVS) the composition is skewed to polar residues. The segment at 852 to 882 (SSNSHDLPVKSPQNVSKSEKQWDSSEQENDT) is disordered. Residues 934–1029 (GCILRKSRVH…SMNVHIIPKK (96 aa)) constitute a DNA-binding region (TF-B3 5).

The protein resides in the nucleus. The chain is Putative B3 domain-containing protein Os03g0621600 from Oryza sativa subsp. japonica (Rice).